Here is an 877-residue protein sequence, read N- to C-terminus: Phosphoenolpyruvate carboxylase (877 aa).

Active-site residues include H138 and K543.

Belongs to the PEPCase type 1 family. Requires Mg(2+) as cofactor.

The catalysed reaction is oxaloacetate + phosphate = phosphoenolpyruvate + hydrogencarbonate. Functionally, forms oxaloacetate, a four-carbon dicarboxylic acid source for the tricarboxylic acid cycle. This is Phosphoenolpyruvate carboxylase from Aeromonas hydrophila subsp. hydrophila (strain ATCC 7966 / DSM 30187 / BCRC 13018 / CCUG 14551 / JCM 1027 / KCTC 2358 / NCIMB 9240 / NCTC 8049).